Consider the following 306-residue polypeptide: tRNA dimethylallyltransferase (306 aa).

9 to 16 (GPTGIGKT) is an ATP binding site. 11–16 (TGIGKT) provides a ligand contact to substrate. The interaction with substrate tRNA stretch occupies residues 34–37 (DSMQ).

This sequence belongs to the IPP transferase family. Monomer. Requires Mg(2+) as cofactor.

It carries out the reaction adenosine(37) in tRNA + dimethylallyl diphosphate = N(6)-dimethylallyladenosine(37) in tRNA + diphosphate. Catalyzes the transfer of a dimethylallyl group onto the adenine at position 37 in tRNAs that read codons beginning with uridine, leading to the formation of N6-(dimethylallyl)adenosine (i(6)A). The sequence is that of tRNA dimethylallyltransferase from Lactobacillus johnsonii (strain CNCM I-12250 / La1 / NCC 533).